The sequence spans 244 residues: rRNA adenine N-6-methyltransferase (244 aa).

Asn11, Ile13, Gly38, Glu59, Asp84, and Ser101 together coordinate S-adenosyl-L-methionine.

This sequence belongs to the class I-like SAM-binding methyltransferase superfamily. rRNA adenine N(6)-methyltransferase family.

Its function is as follows. Involved in erythromycin resistance. This Lysinibacillus sphaericus (Bacillus sphaericus) protein is rRNA adenine N-6-methyltransferase (ermG).